The chain runs to 157 residues: Large ribosomal subunit protein uL15 (157 aa).

Positions M1–T13 are enriched in basic and acidic residues. The disordered stretch occupies residues M1 to K39. Gly residues predominate over residues R21–V35.

Belongs to the universal ribosomal protein uL15 family. As to quaternary structure, part of the 50S ribosomal subunit.

Functionally, binds to the 23S rRNA. The chain is Large ribosomal subunit protein uL15 from Mesorhizobium japonicum (strain LMG 29417 / CECT 9101 / MAFF 303099) (Mesorhizobium loti (strain MAFF 303099)).